The sequence spans 624 residues: Alpha-galactosidase 3 (624 aa).

Residues 1–22 form the signal peptide; sequence MSPSAAVLIPLAAAVLLRPVVG. N-linked (GlcNAc...) asparagine glycans are attached at residues asparagine 37, asparagine 56, asparagine 197, asparagine 259, and asparagine 293. Aspartate 347 functions as the Nucleophile in the catalytic mechanism. N-linked (GlcNAc...) asparagine glycosylation occurs at asparagine 393. Aspartate 412 (proton donor) is an active-site residue. N-linked (GlcNAc...) asparagine glycosylation is present at asparagine 469.

Belongs to the glycosyl hydrolase 27 family.

The protein localises to the secreted. The enzyme catalyses Hydrolysis of terminal, non-reducing alpha-D-galactose residues in alpha-D-galactosides, including galactose oligosaccharides, galactomannans and galactolipids.. Its function is as follows. Alpha-galactosidase involved in the degradation of simple oligosaccharides like melibiose, raffinose and stachyose, and of polymeric galacto(gluco)mannans. The chain is Alpha-galactosidase 3 (agl3) from Hypocrea jecorina (Trichoderma reesei).